The chain runs to 295 residues: Ribosomal protein L11 methyltransferase (295 aa).

4 residues coordinate S-adenosyl-L-methionine: Thr146, Gly167, Asp189, and Asn231.

The protein belongs to the methyltransferase superfamily. PrmA family.

The protein localises to the cytoplasm. The catalysed reaction is L-lysyl-[protein] + 3 S-adenosyl-L-methionine = N(6),N(6),N(6)-trimethyl-L-lysyl-[protein] + 3 S-adenosyl-L-homocysteine + 3 H(+). In terms of biological role, methylates ribosomal protein L11. In Vibrio campbellii (strain ATCC BAA-1116), this protein is Ribosomal protein L11 methyltransferase.